The chain runs to 186 residues: UPF0461 protein C5orf24 homolog (186 aa).

A compositionally biased stretch (polar residues) spans 60–69 (NETHLQTSTS). The disordered stretch occupies residues 60-140 (NETHLQTSTS…AAGYKVSPGR (81 aa)). The segment covering 78–92 (LKKKKNLGRSGKRGR) has biased composition (basic residues). Over residues 94–107 (SGTTKSAGYRTSTG) the composition is skewed to polar residues.

This sequence belongs to the UPF0461 family.

The sequence is that of UPF0461 protein C5orf24 homolog from Xenopus tropicalis (Western clawed frog).